We begin with the raw amino-acid sequence, 182 residues long: NAD(P)H-quinone oxidoreductase subunit J (182 aa).

This sequence belongs to the complex I 30 kDa subunit family. In terms of assembly, NDH-1 can be composed of about 15 different subunits; different subcomplexes with different compositions have been identified which probably have different functions.

Its subcellular location is the cellular thylakoid membrane. It catalyses the reaction a plastoquinone + NADH + (n+1) H(+)(in) = a plastoquinol + NAD(+) + n H(+)(out). It carries out the reaction a plastoquinone + NADPH + (n+1) H(+)(in) = a plastoquinol + NADP(+) + n H(+)(out). Functionally, NDH-1 shuttles electrons from an unknown electron donor, via FMN and iron-sulfur (Fe-S) centers, to quinones in the respiratory and/or the photosynthetic chain. The immediate electron acceptor for the enzyme in this species is believed to be plastoquinone. Couples the redox reaction to proton translocation, and thus conserves the redox energy in a proton gradient. Cyanobacterial NDH-1 also plays a role in inorganic carbon-concentration. This chain is NAD(P)H-quinone oxidoreductase subunit J, found in Synechococcus sp. (strain WH7803).